Here is a 136-residue protein sequence, read N- to C-terminus: UPF0225 protein Mpe_A2093 (136 aa).

The protein belongs to the UPF0225 family.

The polypeptide is UPF0225 protein Mpe_A2093 (Methylibium petroleiphilum (strain ATCC BAA-1232 / LMG 22953 / PM1)).